Here is a 200-residue protein sequence, read N- to C-terminus: Ependymin-related protein 1 (200 aa).

An N-terminal signal peptide occupies residues 1-17 (MILQAALFLAGLTVVSG). Asn-36, Asn-124, and Asn-136 each carry an N-linked (GlcNAc...) asparagine glycan.

This sequence belongs to the ependymin family. In terms of tissue distribution, component of the acid-soluble and acid-insoluble organic matrix of prismatic shell layers (at protein level). Expressed discontinuously in the anterior zone of the outer fold of the mantle where its expression correlates with shell pigmentation.

It is found in the secreted. In Haliotis asinina (Donkey's ear abalone), this protein is Ependymin-related protein 1.